A 213-amino-acid chain; its full sequence is Orotate phosphoribosyltransferase (213 aa).

K26 contacts 5-phospho-alpha-D-ribose 1-diphosphate. Position 34–35 (34–35 (FF)) interacts with orotate. 5-phospho-alpha-D-ribose 1-diphosphate-binding positions include 72–73 (YK), R99, K100, K103, H105, and 124–132 (DDVITAGTS). Residues T128 and R156 each contribute to the orotate site.

It belongs to the purine/pyrimidine phosphoribosyltransferase family. PyrE subfamily. In terms of assembly, homodimer. Requires Mg(2+) as cofactor.

The enzyme catalyses orotidine 5'-phosphate + diphosphate = orotate + 5-phospho-alpha-D-ribose 1-diphosphate. It participates in pyrimidine metabolism; UMP biosynthesis via de novo pathway; UMP from orotate: step 1/2. Functionally, catalyzes the transfer of a ribosyl phosphate group from 5-phosphoribose 1-diphosphate to orotate, leading to the formation of orotidine monophosphate (OMP). The polypeptide is Orotate phosphoribosyltransferase (Methylococcus capsulatus (strain ATCC 33009 / NCIMB 11132 / Bath)).